The primary structure comprises 162 residues: MKKTSINTGTPDVKVDEAALVTPFVKCLARLVRAQDTYGSQDRASDAELLAHFIITEEQRREIPIIGDPGPDVMLRFNIFYTAVALSIEARTGLVASPITMISHEGFGRVLLTTGRLVVFSKTVRDIHRFGFATLRKLAEAGAKLVDDATAAIETYPEVARA.

The protein belongs to the UPF0460 family.

The chain is UPF0460 protein y4vQ from Sinorhizobium fredii (strain NBRC 101917 / NGR234).